The sequence spans 558 residues: MDTRNVIAAISLSAAVIILYSLFFQPDPATIKKNLAEQNKIENNEDTPSLDKNENFSKLSRADALKENDRIQFENGSVVGSISLKGAAIDDLTFKEYNIELNRNEKITLLSPRNVEDGYLIESGFVSTNKNIDIPDASTVWEVSGNNKLTNNNPVKLTWSNTQGITFEKHISLDDQFLFTVKEKIINSSDKSYNFYSYGQIIRNELPEISGFYILHEGFLSVLDDELIEEDYDDIQDKKFTQIAQDGFVAISDKFWVTSVIPPKGKEFKTTFDYKNKFRANYISTKGIEVKANSSIEEKIQIIVAAKRVNVIDGYAENLNINKFDLAIDWGFMYFITKPLFFVLDYFFKLLGNYGLAIIAVTICIRLAFFPLANFSFKSMGKMKLLAPEMARLKELHKDDKMKLQQAMMALYKKEKVNPMSGCLPILVQIPVFFALYKVLFVTIEMRHMPFYGWIHDLSDRDPTSLFNVFGLIPWDPPSFLLIGAWPIIMGITMWIQQKLNPTPPDPIQAKIFMFFPVFLTVILAPFPAGLVIYWSFNNIFTMIQQYIVQRKMTIKTT.

6 helical membrane passes run 6–26 (VIAA…FFQP), 326–348 (LAID…DYFF), 355–377 (GLAI…NFSF), 424–444 (LPIL…FVTI), 469–489 (VFGL…WPII), and 512–532 (IFMF…AGLV).

This sequence belongs to the OXA1/ALB3/YidC family. Type 1 subfamily. In terms of assembly, interacts with the Sec translocase complex via SecD. Specifically interacts with transmembrane segments of nascent integral membrane proteins during membrane integration.

Its subcellular location is the cell inner membrane. In terms of biological role, required for the insertion and/or proper folding and/or complex formation of integral membrane proteins into the membrane. Involved in integration of membrane proteins that insert both dependently and independently of the Sec translocase complex, as well as at least some lipoproteins. Aids folding of multispanning membrane proteins. The chain is Membrane protein insertase YidC from Pelagibacter ubique (strain HTCC1062).